The primary structure comprises 381 residues: Phospholipid scramblase family protein C343.06c (381 aa).

The segment at Q336–Q369 is disordered. The segment covering E344–P359 has biased composition (polar residues).

It belongs to the phospholipid scramblase family.

The protein resides in the mitochondrion. The chain is Phospholipid scramblase family protein C343.06c from Schizosaccharomyces pombe (strain 972 / ATCC 24843) (Fission yeast).